We begin with the raw amino-acid sequence, 111 residues long: Large ribosomal subunit protein eL34B (111 aa).

Phosphotyrosine is present on Y76.

This sequence belongs to the eukaryotic ribosomal protein eL34 family. As to quaternary structure, component of the large ribosomal subunit (LSU). Mature yeast ribosomes consist of a small (40S) and a large (60S) subunit. The 40S small subunit contains 1 molecule of ribosomal RNA (18S rRNA) and at least 33 different proteins. The large 60S subunit contains 3 rRNA molecules (25S, 5.8S and 5S rRNA) and at least 46 different proteins.

The protein localises to the cytoplasm. Its subcellular location is the nucleus. It is found in the nucleolus. In terms of biological role, component of the ribosome, a large ribonucleoprotein complex responsible for the synthesis of proteins in the cell. The small ribosomal subunit (SSU) binds messenger RNAs (mRNAs) and translates the encoded message by selecting cognate aminoacyl-transfer RNA (tRNA) molecules. The large subunit (LSU) contains the ribosomal catalytic site termed the peptidyl transferase center (PTC), which catalyzes the formation of peptide bonds, thereby polymerizing the amino acids delivered by tRNAs into a polypeptide chain. The nascent polypeptides leave the ribosome through a tunnel in the LSU and interact with protein factors that function in enzymatic processing, targeting, and the membrane insertion of nascent chains at the exit of the ribosomal tunnel. In Schizosaccharomyces pombe (strain 972 / ATCC 24843) (Fission yeast), this protein is Large ribosomal subunit protein eL34B (rpl3402).